We begin with the raw amino-acid sequence, 203 residues long: Arcadin-2 (203 aa).

In terms of assembly, interacts with crenactin.

Its subcellular location is the cytoplasm. It is found in the cytoskeleton. Part of an actin-like archaeal cytoskeleton. Prevents polymerization of crenactin filaments by binding its C-terminus into crenactin's hydrophobic groove. May act by competing with the D-loop of the following crenactin subunit for the hydrophobic groove. This chain is Arcadin-2, found in Pyrobaculum calidifontis (strain DSM 21063 / JCM 11548 / VA1).